Reading from the N-terminus, the 143-residue chain is HTH-type transcriptional regulator MntR (143 aa).

The HTH dtxR-type domain occupies 1-63 (MPTPSMEDYL…YERYRGLVLT (63 aa)). Positions 8, 11, 77, 99, 102, and 103 each coordinate Mn(2+).

Belongs to the DtxR/MntR family. In terms of assembly, homodimer.

It is found in the cytoplasm. DNA binding is strongly activated by Mn(2+). In terms of biological role, central regulator of manganese homeostasis. The sequence is that of HTH-type transcriptional regulator MntR from Shouchella clausii (strain KSM-K16) (Alkalihalobacillus clausii).